A 310-amino-acid polypeptide reads, in one-letter code: p-hydroxybenzoic acid efflux pump subunit AaeA (310 aa).

The helical transmembrane segment at 12–32 threads the bilayer; that stretch reads AITVVLVILAFIAIFNAWVYY.

The protein belongs to the membrane fusion protein (MFP) (TC 8.A.1) family.

It is found in the cell inner membrane. Forms an efflux pump with AaeB. The polypeptide is p-hydroxybenzoic acid efflux pump subunit AaeA (Escherichia coli O9:H4 (strain HS)).